Here is a 232-residue protein sequence, read N- to C-terminus: Ubiquinone biosynthesis O-methyltransferase (232 aa).

S-adenosyl-L-methionine-binding residues include R36, G55, D76, and M120.

Belongs to the methyltransferase superfamily. UbiG/COQ3 family.

It carries out the reaction a 3-demethylubiquinol + S-adenosyl-L-methionine = a ubiquinol + S-adenosyl-L-homocysteine + H(+). The catalysed reaction is a 3-(all-trans-polyprenyl)benzene-1,2-diol + S-adenosyl-L-methionine = a 2-methoxy-6-(all-trans-polyprenyl)phenol + S-adenosyl-L-homocysteine + H(+). It functions in the pathway cofactor biosynthesis; ubiquinone biosynthesis. In terms of biological role, O-methyltransferase that catalyzes the 2 O-methylation steps in the ubiquinone biosynthetic pathway. The chain is Ubiquinone biosynthesis O-methyltransferase from Burkholderia lata (strain ATCC 17760 / DSM 23089 / LMG 22485 / NCIMB 9086 / R18194 / 383).